A 76-amino-acid chain; its full sequence is MPSVRSVACCCLLWMMLSVQLVTPGSPATAQLSGQRTARGPGSAICNMACRLEHGHLYPFCNCDGKRDVVSSSMAV.

Positions 1-27 (MPSVRSVACCCLLWMMLSVQLVTPGSP) are cleaved as a signal peptide. A propeptide spanning residues 28–39 (ATAQLSGQRTAR) is cleaved from the precursor. Cystine bridges form between Cys-46–Cys-61 and Cys-50–Cys-63. Aspartic acid 1-amide is present on Asp-64. A propeptide spanning residues 65 to 76 (GKRDVVSSSMAV) is cleaved from the precursor.

Belongs to the conotoxin J superfamily. In terms of tissue distribution, expressed by the venom duct.

Its subcellular location is the secreted. Its function is as follows. Highly inhibits both nicotinic acetylcholine receptors (neuronal (alpha-3/beta-4) and muscular (alpha-1/beta-1/epsilon/delta) subtypes) and the voltage-gated potassium channel Kv1.6/KCNA6 subtype. This chain is Alpha/kappa-conotoxin-like pl14.3, found in Conus planorbis (Planorbis cone).